A 506-amino-acid polypeptide reads, in one-letter code: Deoxyribodipyrimidine photo-lyase (506 aa).

Residues 1 to 21 (MPPTSVSPPRTAPGPANPSPA) are compositionally biased toward pro residues. Residues 1 to 33 (MPPTSVSPPRTAPGPANPSPAHPSRVRVIHPGG) are disordered. Positions 38-171 (GPVVYWMLRD…AVHQVDAHNV (134 aa)) constitute a Photolyase/cryptochrome alpha/beta domain. FAD is bound by residues Tyr-268 and 282–285 (SGLS). Ser-312 is modified (phosphoserine). FAD-binding positions include 319 to 327 (ELVVRRELA), Lys-390, Asn-421, Asp-427, and 427 to 429 (DGR). Residues 487–506 (KKRNAEESPNPVVKLSKSQH) form a disordered region.

Belongs to the DNA photolyase class-2 family. The cofactor is FAD. Expressed in proliferating tissues. Highly expressed in roots and shoot apical meristem (SAM). Expressed in leaves, flag leaves, and panicle.

It is found in the nucleus. The catalysed reaction is cyclobutadipyrimidine (in DNA) = 2 pyrimidine residues (in DNA).. Involved in repair of UV radiation-induced DNA damage. Catalyzes the light-dependent monomerization (300-600 nm) of cyclobutylpyrimidine dimers (CPDs), which are formed between adjacent bases on the same DNA strand upon exposure to ultraviolet radiation. Required for plant survival in the presence of UV-B light. Not involved in the repair of (6-4) photoproducts. This chain is Deoxyribodipyrimidine photo-lyase (PHR), found in Oryza sativa subsp. japonica (Rice).